The following is a 423-amino-acid chain: TNF receptor-associated factor family protein DDB_G0277243 (423 aa).

The segment at 20 to 66 (CSICVDPVLNSLPLEQHQALSCKNGHLLCQACWGKQLALRKECCICK) adopts an RING-type; degenerate zinc-finger fold. 2 consecutive TRAF-type zinc fingers follow at residues 124 to 179 (SHLR…NDMP) and 180 to 237 (THIE…CYLS). The MATH domain occupies 287-411 (RYKGNWTIEN…DGKLTINIDV (125 aa)).

This sequence belongs to the TNF receptor-associated factor family. A subfamily.

It localises to the cytoplasm. Functionally, probable adapter protein and signal transducer that links members of the tumor necrosis factor receptor family to different signaling pathways by association with the receptor cytoplasmic domain and kinases. This Dictyostelium discoideum (Social amoeba) protein is TNF receptor-associated factor family protein DDB_G0277243.